We begin with the raw amino-acid sequence, 130 residues long: Protein YoeA (130 aa).

A signal peptide spans 1 to 28 (MLYNIPCRIYILSTLSLCISGIVSTATA). Residues 51 to 130 (NLWESPATIQ…RCRRYSRGER (80 aa)) enclose the TBDR plug domain.

It belongs to the TonB-dependent receptor family.

The chain is Protein YoeA (yoeA) from Escherichia coli (strain K12).